The primary structure comprises 427 residues: 3-phosphoshikimate 1-carboxyvinyltransferase (427 aa).

The 3-phosphoshikimate site is built by Lys20, Ser21, and Arg25. Lys20 provides a ligand contact to phosphoenolpyruvate. 2 residues coordinate phosphoenolpyruvate: Gly92 and Arg120. The 3-phosphoshikimate site is built by Ser166, Gln168, Asp312, and Lys339. Residue Gln168 coordinates phosphoenolpyruvate. Residue Asp312 is the Proton acceptor of the active site. Residues Arg343 and Arg385 each contribute to the phosphoenolpyruvate site.

The protein belongs to the EPSP synthase family. Monomer.

The protein resides in the cytoplasm. It catalyses the reaction 3-phosphoshikimate + phosphoenolpyruvate = 5-O-(1-carboxyvinyl)-3-phosphoshikimate + phosphate. It participates in metabolic intermediate biosynthesis; chorismate biosynthesis; chorismate from D-erythrose 4-phosphate and phosphoenolpyruvate: step 6/7. In terms of biological role, catalyzes the transfer of the enolpyruvyl moiety of phosphoenolpyruvate (PEP) to the 5-hydroxyl of shikimate-3-phosphate (S3P) to produce enolpyruvyl shikimate-3-phosphate and inorganic phosphate. The sequence is that of 3-phosphoshikimate 1-carboxyvinyltransferase from Streptococcus equi subsp. equi (strain 4047).